A 337-amino-acid polypeptide reads, in one-letter code: Ketol-acid reductoisomerase (NADP(+)) (337 aa).

The 181-residue stretch at 3 to 183 (VEMFYDDDAD…GGTRAGVIKT (181 aa)) folds into the KARI N-terminal Rossmann domain. Residues 26-29 (YGSQ), serine 52, serine 54, and 84-87 (DTAQ) each bind NADP(+). Histidine 109 is an active-site residue. Glycine 135 lines the NADP(+) pocket. In terms of domain architecture, KARI C-terminal knotted spans 184 to 329 (TFKEETETDL…AKLRGLMSWV (146 aa)). Residues aspartate 192, glutamate 196, glutamate 228, and glutamate 232 each contribute to the Mg(2+) site. Serine 253 serves as a coordination point for substrate.

The protein belongs to the ketol-acid reductoisomerase family. Requires Mg(2+) as cofactor.

The catalysed reaction is (2R)-2,3-dihydroxy-3-methylbutanoate + NADP(+) = (2S)-2-acetolactate + NADPH + H(+). It catalyses the reaction (2R,3R)-2,3-dihydroxy-3-methylpentanoate + NADP(+) = (S)-2-ethyl-2-hydroxy-3-oxobutanoate + NADPH + H(+). The protein operates within amino-acid biosynthesis; L-isoleucine biosynthesis; L-isoleucine from 2-oxobutanoate: step 2/4. Its pathway is amino-acid biosynthesis; L-valine biosynthesis; L-valine from pyruvate: step 2/4. Its function is as follows. Involved in the biosynthesis of branched-chain amino acids (BCAA). Catalyzes an alkyl-migration followed by a ketol-acid reduction of (S)-2-acetolactate (S2AL) to yield (R)-2,3-dihydroxy-isovalerate. In the isomerase reaction, S2AL is rearranged via a Mg-dependent methyl migration to produce 3-hydroxy-3-methyl-2-ketobutyrate (HMKB). In the reductase reaction, this 2-ketoacid undergoes a metal-dependent reduction by NADPH to yield (R)-2,3-dihydroxy-isovalerate. In Nocardia farcinica (strain IFM 10152), this protein is Ketol-acid reductoisomerase (NADP(+)).